Reading from the N-terminus, the 680-residue chain is DNA ligase (680 aa).

NAD(+) is bound by residues 35-39, 86-87, and E111; these read DADFD and SL. K113 acts as the N6-AMP-lysine intermediate in catalysis. NAD(+)-binding residues include R134, E174, K290, and K314. The Zn(2+) site is built by C408, C411, C427, and C433. The 84-residue stretch at 597-680 folds into the BRCT domain; that stretch reads VAEQTLEGLT…RLLNTGSADE (84 aa).

Belongs to the NAD-dependent DNA ligase family. LigA subfamily. Mg(2+) is required as a cofactor. It depends on Mn(2+) as a cofactor.

It catalyses the reaction NAD(+) + (deoxyribonucleotide)n-3'-hydroxyl + 5'-phospho-(deoxyribonucleotide)m = (deoxyribonucleotide)n+m + AMP + beta-nicotinamide D-nucleotide.. Its function is as follows. DNA ligase that catalyzes the formation of phosphodiester linkages between 5'-phosphoryl and 3'-hydroxyl groups in double-stranded DNA using NAD as a coenzyme and as the energy source for the reaction. It is essential for DNA replication and repair of damaged DNA. This Corynebacterium glutamicum (strain ATCC 13032 / DSM 20300 / JCM 1318 / BCRC 11384 / CCUG 27702 / LMG 3730 / NBRC 12168 / NCIMB 10025 / NRRL B-2784 / 534) protein is DNA ligase.